A 308-amino-acid polypeptide reads, in one-letter code: Ava biosynthesis cluster protein O (308 aa).

It participates in secondary metabolite biosynthesis. Part of the cluster that mediates the biosynthesis of a highly modified cyclo-arginine-tryptophan dipeptide (cRW). The first step of the pathway is perfornmed by the arginine-containing cyclodipeptide synthase (RCPDS) avaA that acts as the scaffold-generating enzyme and is responsible for formation of the cyclo-Arg-Trp (cRW) diketopiperazine. AvaB then acts as a multifunctional flavoenzyme that is responsible for generating the cyclo-Arg-formylkynurenine DKP, which can be deformylated by avaC. AvaB then further catalyzes an additional N-oxidation followed by cyclization and dehydration. The next step is an N-acetylation of the guanidine group catalyzed by the arginine N-acetyltransferase avaD. The roles of the additional enzymes identified within the ava cluster still have to be determined. The polypeptide is Ava biosynthesis cluster protein O (Aspergillus versicolor).